A 1136-amino-acid chain; its full sequence is Collagen alpha-1(XIX) chain (1136 aa).

The first 23 residues, 1 to 23, serve as a signal peptide directing secretion; sequence MRHTGSWKLWTWVTTFLLPACTC. N-linked (GlcNAc...) asparagine glycosylation is present at N47. Residues 47 to 231 enclose the Laminin G-like domain; sequence NKSELSGFDL…LHQLRIYCNA (185 aa). 4 disordered regions span residues 252–272, 289–673, 699–1005, and 1043–1136; these read DFGS…SSYL, EEAG…PGDP, GLKS…TPAD, and SAQA…AGGK. Low complexity predominate over residues 254–266; sequence GSTTSSWGTSNTG. The segment at 289-348 is triple-helical region 1 (COL1); that stretch reads EEAGLPGTLRSIGHKGDKGEPGEHGLDGTPGLPGQKGEQGLEGIKGEIGEKGEPGAKGDS. Collagen-like domains follow at residues 292-346, 347-388, and 389-430; these read GLPG…GAKG, DSGL…ALTG, and SIGI…GLQG. 2 stretches are compositionally biased toward basic and acidic residues: residues 302–314 and 332–344; these read HKGD…EHGL and IKGE…EPGA. The tract at residues 367 to 426 is triple-helical region 2 (COL2); the sequence is GPPGPKGDKGDMGPPGPPALTGSIGIQGPQGPPGKEGQRGRRGKTGPPGNPGPPGPPGPP. A compositionally biased stretch (low complexity) spans 387–401; the sequence is TGSIGIQGPQGPPGK. Over residues 414 to 426 the composition is skewed to pro residues; sequence PGNPGPPGPPGPP. A compositionally biased stretch (low complexity) spans 428-437; the sequence is LQGLQQPFGG. The tract at residues 442–682 is triple-helical region 3 (COL3); it reads GTGEHGASGP…PIALPLLGDI (241 aa). The span at 472 to 490 shows a compositional bias: basic and acidic residues; that stretch reads HKGEPGEPLTKGEKGDRGE. Composition is skewed to low complexity over residues 511-523 and 567-577; these read LLGS…QQGP and PGLKGDAGPPG. 6 Collagen-like domains span residues 519-577, 578-618, 620-673, 722-777, 778-810, and 833-891; these read GQQG…GPPG, ISLP…GPPG, GIPG…PGDP, KGDV…GPPG, LTGR…GPPG, and GYPG…APGP. The segment covering 634 to 645 has biased composition (low complexity); sequence PGIQGPRGLPGL. The tract at residues 694–812 is triple-helical region 4 (COL4); that stretch reads QANVPGLKSI…PGPPGPPGVP (119 aa). Composition is skewed to basic and acidic residues over residues 714–725 and 737–758; these read GKYDPAARKGDV and EGPK…KGDE. A compositionally biased stretch (low complexity) spans 764–788; sequence PGLSGAPGPTGPPGLTGRTGHPGPT. Pro residues-rich tracts occupy residues 800–811 and 834–846; these read PGKPGPPGPPGV and YPGP…PKGD. Residues 827 to 1006 are triple-helical region 5 (COL5); sequence GGVNVPGYPG…PGIPGTPADA (180 aa). Low complexity predominate over residues 877 to 886; sequence PGIAGISGKP. Residues 937 to 948 are compositionally biased toward basic and acidic residues; that stretch reads PGDRGPKGERGD. Positions 946-948 match the Cell attachment site motif; it reads RGD. The interval 1048–1105 is triple-helical region 6 (COL6); it reads GRPGPPGKDGLPGPPGDPGPQGYRGQKGERGEPGIGLPGSPGLPGSSAVGLPGSPGAP. The span at 1087–1101 shows a compositional bias: low complexity; sequence SPGLPGSSAVGLPGS. Pro residues predominate over residues 1102 to 1113; the sequence is PGAPGPQGPPGP.

This sequence belongs to the fibril-associated collagens with interrupted helices (FACIT) family. Oligomer; disulfide-linked. Post-translationally, prolines at the third position of the tripeptide repeating unit (G-X-Y) are hydroxylated in some or all of the chains.

Its subcellular location is the secreted. The protein resides in the extracellular space. It localises to the extracellular matrix. In terms of biological role, may act as a cross-bridge between fibrils and other extracellular matrix molecules. Involved in skeletal myogenesis in the developing esophagus. May play a role in organization of the pericellular matrix or the sphinteric smooth muscle. In Mus musculus (Mouse), this protein is Collagen alpha-1(XIX) chain.